The following is a 27-amino-acid chain: 23S rRNA methylase leader peptide (27 aa).

Its function is as follows. This peptide is involved in the control mechanism of the synthesis of the erythromycin resistance protein. This is 23S rRNA methylase leader peptide (ermC) from Enterococcus faecalis (Streptococcus faecalis).